Here is a 247-residue protein sequence, read N- to C-terminus: Probable transcriptional regulatory protein lpp1249 (247 aa).

The protein belongs to the TACO1 family.

It is found in the cytoplasm. In Legionella pneumophila (strain Paris), this protein is Probable transcriptional regulatory protein lpp1249.